The sequence spans 341 residues: Delta(1)-pyrroline-2-carboxylate reductase (341 aa).

Ser47 functions as the Charge relay system in the catalytic mechanism. The active-site Proton donor is the His48. Arg52 is a substrate binding site. Residue 120 to 124 (HFSAL) participates in NADP(+) binding. Thr160 contributes to the substrate binding site. Residue 178-180 (DFA) participates in NADP(+) binding. 186–187 (RG) serves as a coordination point for substrate. The Charge relay system role is filled by Glu188. NADP(+) contacts are provided by residues 229–230 (HK) and 305–311 (RLPSERR).

It belongs to the LDH2/MDH2 oxidoreductase family. In terms of assembly, homodimer.

The catalysed reaction is L-proline + NAD(+) = 1-pyrroline-2-carboxylate + NADH + H(+). The enzyme catalyses L-proline + NADP(+) = 1-pyrroline-2-carboxylate + NADPH + H(+). In terms of biological role, catalyzes the reduction of Delta(1)-pyrroline-2-carboxylate (Pyr2C) to L-proline, using NADPH as the electron donor. Is likely involved in a degradation pathway that converts cis- and trans-3-hydroxy-L-proline (c3LHyp and t3LHyp) to L-proline, which would allow S.novella to grow on c3LHyp or t3LHyp as a sole carbon source. The chain is Delta(1)-pyrroline-2-carboxylate reductase from Ancylobacter novellus (strain ATCC 8093 / DSM 506 / JCM 20403 / CCM 1077 / IAM 12100 / NBRC 12443 / NCIMB 10456) (Starkeya novella).